The chain runs to 249 residues: Ubiquinone biosynthesis O-methyltransferase (249 aa).

A disordered region spans residues 1–23 (MTSPSQVLPASAGKPTGPNADPK). Positions 52, 71, 92, and 136 each coordinate S-adenosyl-L-methionine.

This sequence belongs to the methyltransferase superfamily. UbiG/COQ3 family.

It carries out the reaction a 3-demethylubiquinol + S-adenosyl-L-methionine = a ubiquinol + S-adenosyl-L-homocysteine + H(+). It catalyses the reaction a 3-(all-trans-polyprenyl)benzene-1,2-diol + S-adenosyl-L-methionine = a 2-methoxy-6-(all-trans-polyprenyl)phenol + S-adenosyl-L-homocysteine + H(+). It participates in cofactor biosynthesis; ubiquinone biosynthesis. O-methyltransferase that catalyzes the 2 O-methylation steps in the ubiquinone biosynthetic pathway. The polypeptide is Ubiquinone biosynthesis O-methyltransferase (Cupriavidus pinatubonensis (strain JMP 134 / LMG 1197) (Cupriavidus necator (strain JMP 134))).